A 97-amino-acid polypeptide reads, in one-letter code: HssA/B-like protein 44 (97 aa).

Disordered stretches follow at residues 1 to 22 and 62 to 97; these read MTLF…SSIA and ASTS…CGCN. Over residues 72–84 the composition is skewed to basic residues; it reads RPGRGHGGPHGHG. The segment covering 85–97 has biased composition (gly residues); the sequence is RGGSGSGSSCGCN.

Belongs to the hssA/B family.

The sequence is that of HssA/B-like protein 44 (hssl44) from Dictyostelium discoideum (Social amoeba).